The following is a 149-amino-acid chain: Transcriptional repressor NrdR (149 aa).

Residues 3 to 34 fold into a zinc finger; that stretch reads CPFCSATDTKVIDSRLVAEGHQVRRRRECTEC. The ATP-cone domain maps to 49-139; the sequence is PRVIKRDGSR…VYRAFEDVSE (91 aa).

Belongs to the NrdR family. Requires Zn(2+) as cofactor.

Its function is as follows. Negatively regulates transcription of bacterial ribonucleotide reductase nrd genes and operons by binding to NrdR-boxes. In Shewanella putrefaciens (strain CN-32 / ATCC BAA-453), this protein is Transcriptional repressor NrdR.